The primary structure comprises 514 residues: Maltose/maltodextrin transport system permease protein MalF (514 aa).

Topologically, residues 1 to 16 (MDVIKKKHWWQSDQLK) are cytoplasmic. A helical membrane pass occupies residues 17 to 36 (WSVIGLLGLLVGYLVVLMYV). The Periplasmic segment spans residues 37-39 (QGE). The helical transmembrane segment at 40–57 (YLFAIMTLILSSAGLYIF) threads the bilayer. The Cytoplasmic segment spans residues 58–69 (ANRKTYAWRYVY). A helical transmembrane segment spans residues 70 to 92 (PGLAGMGLFVLFPLVCTIAIAFT). At 93–283 (NYSSTNQLTF…QKPFFAIFVW (191 aa)) the chain is on the periplasmic side. The ABC transmembrane type-1 domain maps to 281–505 (FVWTVVFSVL…LLVGALAIVN (225 aa)). The chain crosses the membrane as a helical span at residues 284–306 (TVVFSVLTVVLTVAVGMVLACLV). Residues 307 to 318 (QWEALKGKAIYR) are Cytoplasmic-facing. The helical transmembrane segment at 319–341 (VLLILPYAVPSFISILIFKGLFN) threads the bilayer. At 342–369 (QSFGEINMMLSALFGIKPAWFSDPNTAR) the chain is on the periplasmic side. The chain crosses the membrane as a helical span at residues 370 to 392 (AMVIIVNTWLGYPYMMILCMGLL). The Cytoplasmic segment spans residues 393-412 (KAIPDDLYEASAMDGAGPFQ). Residues 413–435 (NFFKITLPLLIKPLTPLMIASFA) form a helical membrane-spanning segment. Over 436-483 (FNFNNFVLIQLLTNGGPDRLGTTTPAGYTDLLVSYTYRIAFEGGGGQD) the chain is Periplasmic. Residues 484-506 (FGLAAAIATLIFLLVGALAIVNL) traverse the membrane as a helical segment. Over 507 to 514 (KATRMKFD) the chain is Cytoplasmic.

Belongs to the binding-protein-dependent transport system permease family. MalFG subfamily. The complex is composed of two ATP-binding proteins (MalK), two transmembrane proteins (MalG and MalF) and a solute-binding protein (MalE).

Its subcellular location is the cell inner membrane. Part of the ABC transporter complex MalEFGK involved in maltose/maltodextrin import. Probably responsible for the translocation of the substrate across the membrane. This is Maltose/maltodextrin transport system permease protein MalF (malF) from Salmonella typhimurium (strain LT2 / SGSC1412 / ATCC 700720).